The following is a 158-amino-acid chain: Cyclic pyranopterin monophosphate synthase (158 aa).

Substrate-binding positions include 75–77 (LCH) and 113–114 (ME). Aspartate 128 is a catalytic residue.

This sequence belongs to the MoaC family. In terms of assembly, homohexamer; trimer of dimers.

It carries out the reaction (8S)-3',8-cyclo-7,8-dihydroguanosine 5'-triphosphate = cyclic pyranopterin phosphate + diphosphate. Its pathway is cofactor biosynthesis; molybdopterin biosynthesis. In terms of biological role, catalyzes the conversion of (8S)-3',8-cyclo-7,8-dihydroguanosine 5'-triphosphate to cyclic pyranopterin monophosphate (cPMP). This is Cyclic pyranopterin monophosphate synthase from Histophilus somni (strain 129Pt) (Haemophilus somnus).